The primary structure comprises 319 residues: L-tryptophan isonitrile synthase AmbI1 (319 aa).

The protein belongs to the isocyanide synthase family.

The enzyme catalyses D-ribulose 5-phosphate + L-tryptophan = (2S)-3-(1H-indol-3-yl)-2-isocyanopropanoate + hydroxyacetone + formaldehyde + phosphate + H2O + H(+). Involved in the biosynthesis of ambiguines, a family of hapalindole-type alkaloids. Responsible for the synthesis of the isonitrile group on tryptophan using ribulose 5-phosphate as the source of the carbon atom. This Fischerella ambigua (strain UTEX 1903) protein is L-tryptophan isonitrile synthase AmbI1.